A 245-amino-acid polypeptide reads, in one-letter code: Ribonuclease 3 (245 aa).

The 130-residue stretch at 19–148 folds into the RNase III domain; that stretch reads FKVFQEKIGI…FIGALYLDQG (130 aa). Mg(2+) is bound at residue Glu-61. Asp-65 is an active-site residue. Positions 134 and 137 each coordinate Mg(2+). The active site involves Glu-137. The region spanning 174 to 243 is the DRBM domain; sequence DYKSQLQELI…AAEALKKLKE (70 aa).

Belongs to the ribonuclease III family. As to quaternary structure, homodimer. The cofactor is Mg(2+).

It is found in the cytoplasm. It carries out the reaction Endonucleolytic cleavage to 5'-phosphomonoester.. Digests double-stranded RNA. Involved in the processing of primary rRNA transcript to yield the immediate precursors to the large and small rRNAs (23S and 16S). Processes some mRNAs, and tRNAs when they are encoded in the rRNA operon. Processes pre-crRNA and tracrRNA of type II CRISPR loci if present in the organism. The protein is Ribonuclease 3 of Bacillus cereus (strain ZK / E33L).